A 142-amino-acid chain; its full sequence is Large ribosomal subunit protein uL11 (142 aa).

The protein belongs to the universal ribosomal protein uL11 family. Part of the ribosomal stalk of the 50S ribosomal subunit. Interacts with L10 and the large rRNA to form the base of the stalk. L10 forms an elongated spine to which L12 dimers bind in a sequential fashion forming a multimeric L10(L12)X complex. In terms of processing, one or more lysine residues are methylated.

In terms of biological role, forms part of the ribosomal stalk which helps the ribosome interact with GTP-bound translation factors. The sequence is that of Large ribosomal subunit protein uL11 from Leptospira borgpetersenii serovar Hardjo-bovis (strain JB197).